The following is a 339-amino-acid chain: Dihydroorotate dehydrogenase (quinone) (339 aa).

Residues 61–65 (AGLDK) and Thr-85 each bind FMN. Lys-65 is a binding site for substrate. Position 110–114 (110–114 (NRMGF)) interacts with substrate. FMN-binding residues include Asn-138 and Asn-171. Asn-171 provides a ligand contact to substrate. The active-site Nucleophile is the Ser-174. Asn-176 lines the substrate pocket. The FMN site is built by Lys-216 and Thr-244. 245–246 (NT) provides a ligand contact to substrate. Residues Gly-267, Gly-296, and 317 to 318 (YS) each bind FMN.

The protein belongs to the dihydroorotate dehydrogenase family. Type 2 subfamily. Monomer. FMN is required as a cofactor.

It localises to the cell membrane. It carries out the reaction (S)-dihydroorotate + a quinone = orotate + a quinol. The protein operates within pyrimidine metabolism; UMP biosynthesis via de novo pathway; orotate from (S)-dihydroorotate (quinone route): step 1/1. Its function is as follows. Catalyzes the conversion of dihydroorotate to orotate with quinone as electron acceptor. The polypeptide is Dihydroorotate dehydrogenase (quinone) (Teredinibacter turnerae (strain ATCC 39867 / T7901)).